The primary structure comprises 194 residues: NADH-quinone oxidoreductase subunit B (194 aa).

Residues C72, C73, C137, and C167 each coordinate [4Fe-4S] cluster.

Belongs to the complex I 20 kDa subunit family. NDH-1 is composed of 14 different subunits. Subunits NuoB, C, D, E, F, and G constitute the peripheral sector of the complex. [4Fe-4S] cluster is required as a cofactor.

Its subcellular location is the cell inner membrane. It carries out the reaction a quinone + NADH + 5 H(+)(in) = a quinol + NAD(+) + 4 H(+)(out). NDH-1 shuttles electrons from NADH, via FMN and iron-sulfur (Fe-S) centers, to quinones in the respiratory chain. Couples the redox reaction to proton translocation (for every two electrons transferred, four hydrogen ions are translocated across the cytoplasmic membrane), and thus conserves the redox energy in a proton gradient. The chain is NADH-quinone oxidoreductase subunit B from Granulibacter bethesdensis (strain ATCC BAA-1260 / CGDNIH1).